Consider the following 427-residue polypeptide: MAMRGDPKQRRASASAPHGGAAHHVADKLRRHSTFLLLLLLLWFALSLYLFLSATPPPPRPAFLPSTSTPRPALRIYVYDLPARFNRHWVAADARCATHLFAAEVALHEALLAYAGRAARPDDATLFFVPVYVSCNFSTDNGFPSLSHARALLADAVDLVRAQMPYWNRSAGADHVFVASHDFGACFHPMEDVAIADGIPEFLKRSILLQTFGVQGTHVCQEADHVVIPPHVPPEVALELPEPEKAQRDIFAFFRGKMEVHPKNISGRFYSKKVRTELLQKYGRNRKFYLKRKRYGNYRSEMARSLFCLCPLGWAPWSPRLVESVLLGCIPVIIADDIRLPFPSVLQWLDISLQVAEKDVASLEMVLDHVVATNLTVIQKNLWDPVKRKALVFNRPMEEGDATWQVLRELEILLDRSQRRHVESWKR.

Topologically, residues 1–33 (MAMRGDPKQRRASASAPHGGAAHHVADKLRRHS) are cytoplasmic. The chain crosses the membrane as a helical; Signal-anchor for type II membrane protein span at residues 34–54 (TFLLLLLLLWFALSLYLFLSA). The Lumenal segment spans residues 55–427 (TPPPPRPAFL…QRRHVESWKR (373 aa)). Asn136, Asn168, Asn264, and Asn374 each carry an N-linked (GlcNAc...) asparagine glycan.

This sequence belongs to the glycosyltransferase 47 family.

Its subcellular location is the golgi apparatus membrane. Involved in the synthesis of glucuronoxylan hemicellulose in secondary cell walls. This Oryza sativa subsp. japonica (Rice) protein is Probable glucuronosyltransferase Os03g0107900.